A 256-amino-acid chain; its full sequence is Imidazole glycerol phosphate synthase subunit HisF (256 aa).

Residues Asp-11 and Asp-130 contribute to the active site.

It belongs to the HisA/HisF family. As to quaternary structure, heterodimer of HisH and HisF.

The protein resides in the cytoplasm. It catalyses the reaction 5-[(5-phospho-1-deoxy-D-ribulos-1-ylimino)methylamino]-1-(5-phospho-beta-D-ribosyl)imidazole-4-carboxamide + L-glutamine = D-erythro-1-(imidazol-4-yl)glycerol 3-phosphate + 5-amino-1-(5-phospho-beta-D-ribosyl)imidazole-4-carboxamide + L-glutamate + H(+). It functions in the pathway amino-acid biosynthesis; L-histidine biosynthesis; L-histidine from 5-phospho-alpha-D-ribose 1-diphosphate: step 5/9. IGPS catalyzes the conversion of PRFAR and glutamine to IGP, AICAR and glutamate. The HisF subunit catalyzes the cyclization activity that produces IGP and AICAR from PRFAR using the ammonia provided by the HisH subunit. The polypeptide is Imidazole glycerol phosphate synthase subunit HisF (Cupriavidus taiwanensis (strain DSM 17343 / BCRC 17206 / CCUG 44338 / CIP 107171 / LMG 19424 / R1) (Ralstonia taiwanensis (strain LMG 19424))).